Reading from the N-terminus, the 359-residue chain is Putative transposase y4uE (359 aa).

Disordered regions lie at residues 1-31 and 318-359; these read MGDGPNWRSLPEPSRFVGSDPSPPVPRAPGG and HYAH…EEAA.

The protein belongs to the transposase 9 family.

This chain is Putative transposase y4uE, found in Sinorhizobium fredii (strain NBRC 101917 / NGR234).